The following is a 97-amino-acid chain: Putative mitochondrial import inner membrane translocase subunit Tim8 A-B (97 aa).

The Twin CX3C motif signature appears at 43–66 (CWEKCMDKPGPRLDGRAELCLVNC). 2 disulfides stabilise this stretch: C43–C66 and C47–C62.

This sequence belongs to the small Tim family. Heterohexamer; possibly composed of 3 copies of TIMM8AB and 3 copies of TIMM13.

It localises to the mitochondrion inner membrane. Its function is as follows. Putative mitochondrial intermembrane chaperone that participates in the import and insertion of some multi-pass transmembrane proteins into the mitochondrial inner membrane. Also required for the transfer of beta-barrel precursors from the TOM complex to the sorting and assembly machinery (SAM complex) of the outer membrane. Acts as a chaperone-like protein that protects the hydrophobic precursors from aggregation and guide them through the mitochondrial intermembrane space. This chain is Putative mitochondrial import inner membrane translocase subunit Tim8 A-B (Timm8a2), found in Mus musculus (Mouse).